A 131-amino-acid polypeptide reads, in one-letter code: uncharacterized protein (131 aa).

Positions 31–40 (AAATSRAAPL) are enriched in low complexity. The tract at residues 31–131 (AAATSRAAPL…EAKTEQTKTP (101 aa)) is disordered.

This is an uncharacterized protein from Homo sapiens (Human).